The chain runs to 333 residues: uncharacterized protein (333 aa).

This sequence to E.coli YfeH.

This is an uncharacterized protein from Pseudomonas aeruginosa (strain ATCC 15692 / DSM 22644 / CIP 104116 / JCM 14847 / LMG 12228 / 1C / PRS 101 / PAO1).